Reading from the N-terminus, the 116-residue chain is Cocaine- and amphetamine-regulated transcript protein (116 aa).

Positions methionine 1–alanine 27 are cleaved as a signal peptide. Position 41 is a phosphotyrosine (tyrosine 41). Serine 48 carries the post-translational modification Phosphoserine. 3 cysteine pairs are disulfide-bonded: cysteine 82–cysteine 100, cysteine 88–cysteine 108, and cysteine 102–cysteine 115.

It belongs to the CART family. In terms of tissue distribution, hypothalamus. Found in neurons of the ventrolateral part of the arcuate nucleus, in the external zone of the median eminence, and also found in terminals in the periventricular part of the paraventricular nucleus.

It is found in the secreted. In terms of biological role, satiety factor closely associated with the actions of leptin and neuropeptide Y; this anorectic peptide inhibits both normal and starvation-induced feeding and completely blocks the feeding response induced by neuropeptide Y and regulated by leptin in the hypothalamus. It promotes neuronal development and survival in vitro. This Homo sapiens (Human) protein is Cocaine- and amphetamine-regulated transcript protein (CARTPT).